A 588-amino-acid polypeptide reads, in one-letter code: Dual specificity tyrosine-phosphorylation-regulated kinase 3 (588 aa).

Residues 1–188 are disordered; that stretch reads MGGTARGPGR…HGVIGGPNNG (188 aa). A compositionally biased stretch (polar residues) spans 97 to 134; that stretch reads SNTIQSDGISDSEKCSPTVSQGKSSDCLNTVKSNSSSK. The region spanning 209–522 is the Protein kinase domain; it reads YEVLKIIGKG…PAQALRHPWI (314 aa). Residues 215 to 223, K238, and 288 to 291 each bind ATP; these read IGKGSFGQV and FELL. D335 functions as the Proton acceptor in the catalytic mechanism. Phosphoserine is present on S350. Position 369 is a phosphotyrosine (Y369). A Nuclear localization signal motif is present at residues 468–481; it reads RSRRGKKRGPPGSK.

Belongs to the protein kinase superfamily. CMGC Ser/Thr protein kinase family. MNB/DYRK subfamily. In terms of assembly, interacts with SIRT1. Requires Mg(2+) as cofactor. Ubiquitinated at anaphase by the anaphase-promoting complex (APC/C), leading to its degradation by the proteasome. Post-translationally, protein kinase activity is activated following autophosphorylation at Tyr-369. Autophosphorylation at Ser-350 stabilizes the protein and enhances the protein kinase activity. As to expression, isoform 1: Highly expressed in testis and in hematopoietic tissue such as fetal liver, and bone marrow. Isoform 1: Predominant form in fetal liver and bone marrow. Isoform 1: Present at low levels in heart, pancreas, lymph node and thymus. Isoform 2: Highly expressed in testis and in hematopoietic tissue such as fetal liver, and bone marrow. Isoform 2: Predominant form in testis. Isoform 2: Present at low levels in heart, pancreas, lymph node and thymus.

The protein resides in the nucleus. It localises to the cytoplasm. It is found in the nucleus speckle. The protein localises to the cytoplasmic granule. Its subcellular location is the cytoskeleton. The protein resides in the microtubule organizing center. It localises to the centrosome. The catalysed reaction is L-seryl-[protein] + ATP = O-phospho-L-seryl-[protein] + ADP + H(+). The enzyme catalyses L-threonyl-[protein] + ATP = O-phospho-L-threonyl-[protein] + ADP + H(+). It carries out the reaction L-tyrosyl-[protein] + ATP = O-phospho-L-tyrosyl-[protein] + ADP + H(+). Its activity is regulated as follows. Protein kinase activity is activated following autophosphorylation at Tyr-369. Inhibited by harmine, an ATP competitive inhibitor. Inhibited by small-compound GSK-626616. In terms of biological role, dual-specificity protein kinase that promotes disassembly of several types of membraneless organelles during mitosis, such as stress granules, nuclear speckles and pericentriolar material. Dual-specificity tyrosine-regulated kinases (DYRKs) autophosphorylate a critical tyrosine residue in their activation loop and phosphorylate their substrate on serine and threonine residues. Acts as a central dissolvase of membraneless organelles during the G2-to-M transition, after the nuclear-envelope breakdown: acts by mediating phosphorylation of multiple serine and threonine residues in unstructured domains of proteins, such as SRRM1 and PCM1. Does not mediate disassembly of all membraneless organelles: disassembly of P-body and nucleolus is not regulated by DYRK3. Dissolution of membraneless organelles at the onset of mitosis is also required to release mitotic regulators, such as ZNF207, from liquid-unmixed organelles where they are sequestered and keep them dissolved during mitosis. Regulates mTORC1 by mediating the dissolution of stress granules: during stressful conditions, DYRK3 partitions from the cytosol to the stress granule, together with mTORC1 components, which prevents mTORC1 signaling. When stress signals are gone, the kinase activity of DYRK3 is required for the dissolution of stress granule and mTORC1 relocation to the cytosol: acts by mediating the phosphorylation of the mTORC1 inhibitor AKT1S1, allowing full reactivation of mTORC1 signaling. Also acts as a negative regulator of EPO-dependent erythropoiesis: may place an upper limit on red cell production during stress erythropoiesis. Inhibits cell death due to cytokine withdrawal in hematopoietic progenitor cells. Promotes cell survival upon genotoxic stress through phosphorylation of SIRT1: this in turn inhibits p53/TP53 activity and apoptosis. The protein is Dual specificity tyrosine-phosphorylation-regulated kinase 3 of Homo sapiens (Human).